Here is a 457-residue protein sequence, read N- to C-terminus: Ribosomal protein uS12 methylthiotransferase RimO (457 aa).

An MTTase N-terminal domain is found at 6-116; it reads PKVGFVSLGC…VMEAVHAALP (111 aa). 6 residues coordinate [4Fe-4S] cluster: cysteine 15, cysteine 51, cysteine 80, cysteine 147, cysteine 151, and cysteine 154. The Radical SAM core domain maps to 133–371; sequence LTPRHYAYLK…AKQAQISALR (239 aa). The TRAM domain maps to 373–441; the sequence is ESKIGSVQQC…EHDLFGDALP (69 aa).

This sequence belongs to the methylthiotransferase family. RimO subfamily. Requires [4Fe-4S] cluster as cofactor.

It is found in the cytoplasm. It carries out the reaction L-aspartate(89)-[ribosomal protein uS12]-hydrogen + (sulfur carrier)-SH + AH2 + 2 S-adenosyl-L-methionine = 3-methylsulfanyl-L-aspartate(89)-[ribosomal protein uS12]-hydrogen + (sulfur carrier)-H + 5'-deoxyadenosine + L-methionine + A + S-adenosyl-L-homocysteine + 2 H(+). Functionally, catalyzes the methylthiolation of an aspartic acid residue of ribosomal protein uS12. The sequence is that of Ribosomal protein uS12 methylthiotransferase RimO from Xanthomonas axonopodis pv. citri (strain 306).